A 119-amino-acid polypeptide reads, in one-letter code: Large ribosomal subunit protein bL20 (119 aa).

This sequence belongs to the bacterial ribosomal protein bL20 family.

Its function is as follows. Binds directly to 23S ribosomal RNA and is necessary for the in vitro assembly process of the 50S ribosomal subunit. It is not involved in the protein synthesizing functions of that subunit. This chain is Large ribosomal subunit protein bL20, found in Afipia carboxidovorans (strain ATCC 49405 / DSM 1227 / KCTC 32145 / OM5) (Oligotropha carboxidovorans).